We begin with the raw amino-acid sequence, 503 residues long: MTDKKYIVALDQGTTSSRAVVMDHDANIVSVSQREFEQIYPKPGWVEHDPMEIWASQSSTLVEALAKADINSDQIAAIGITNQRETVVVWERETGKPIYNAIVWQCRRTAEICEQLKRDGMEEYIRKATGLVVDPYFSGTKVKWILDHVEGSRERAKRGELLFGTVDTWLIWKMTQGRVHVTDYTNASRTMLFNIHELDWDDKMLDALDIPRAMLPEVRKSSEVYGQTNIGGKGGTRIPIAGIAGDQQAALFGQLCVKEGMAKNTYGTGCFMLMNTGEKAVTSTHGLLTTIACGPRGEVNYALEGAVFMAGASIQWLRDEMKLISDAFDSEYFATKVKDTNGVYVVPAFTGLGAPYWDPYARGAIFGLTRGVNSNHIIRATLESIAYQTRDVLEAMQADSGIRLHALRVDGGAVANNFLMQFQSDILGTRVERPEVREVTALGAAYLAGLAVGFWQNLDELQEKAVIEREFRPGIETTERNYRYSGWKKAVKRALAWEEHDEA.

Residue Thr-14 coordinates ADP. Thr-14, Thr-15, and Ser-16 together coordinate ATP. Residue Thr-14 participates in sn-glycerol 3-phosphate binding. Arg-18 contacts ADP. Sn-glycerol 3-phosphate contacts are provided by Arg-84, Glu-85, Tyr-136, and Asp-246. 5 residues coordinate glycerol: Arg-84, Glu-85, Tyr-136, Asp-246, and Gln-247. 2 residues coordinate ADP: Thr-268 and Gly-311. The ATP site is built by Thr-268, Gly-311, Gln-315, and Gly-412. The ADP site is built by Gly-412 and Asn-416.

Belongs to the FGGY kinase family. Homotetramer and homodimer (in equilibrium). Heterodimer with EIIA-Glc. Binds 1 zinc ion per glycerol kinase EIIA-Glc dimer. The zinc ion is important for dimerization.

The catalysed reaction is glycerol + ATP = sn-glycerol 3-phosphate + ADP + H(+). Its pathway is polyol metabolism; glycerol degradation via glycerol kinase pathway; sn-glycerol 3-phosphate from glycerol: step 1/1. With respect to regulation, activity of this regulatory enzyme is affected by several metabolites. Allosterically and non-competitively inhibited by fructose 1,6-bisphosphate (FBP) and unphosphorylated phosphocarrier protein EIIA-Glc (III-Glc), an integral component of the bacterial phosphotransferase (PTS) system. Key enzyme in the regulation of glycerol uptake and metabolism. Catalyzes the phosphorylation of glycerol to yield sn-glycerol 3-phosphate. The polypeptide is Glycerol kinase (Klebsiella pneumoniae (strain 342)).